A 130-amino-acid chain; its full sequence is Small ribosomal subunit protein uS8 (130 aa).

Belongs to the universal ribosomal protein uS8 family. As to quaternary structure, part of the 30S ribosomal subunit.

Its function is as follows. One of the primary rRNA binding proteins, it binds directly to 16S rRNA central domain where it helps coordinate assembly of the platform of the 30S subunit. In Thermococcus gammatolerans (strain DSM 15229 / JCM 11827 / EJ3), this protein is Small ribosomal subunit protein uS8.